A 1122-amino-acid chain; its full sequence is Desmoglein-2 (1122 aa).

Positions 1-28 are cleaved as a signal peptide; sequence MARSPGDRCALLLLVQLLAVVCLDFGNG. A propeptide spanning residues 29–54 is cleaved from the precursor; that stretch reads LHLEVFSPRNEGKPFPKHTHLVRQKR. Cadherin domains are found at residues 55–164, 165–277, 278–398, and 397–504; these read AWIT…EPVF, TQEV…IPVV, ENKM…SSVV, and VVSF…CPVL. Residues 55-618 are Extracellular-facing; it reads AWITAPVALR…YDNYVGLGPA (564 aa). An N-linked (GlcNAc...) asparagine glycan is attached at Asn117. 3 N-linked (GlcNAc...) asparagine glycosylation sites follow: Asn314, Asn467, and Asn519. Residues 619-639 form a helical membrane-spanning segment; it reads AIALMILALLLLLLVPLLLLI. Residues 640 to 1122 lie on the Cytoplasmic side of the membrane; it reads CHCGGGAKGF…KHSTMQHSYS (483 aa). Phosphoserine is present on residues Ser685, Ser706, Ser709, and Ser729. Thr808 carries the post-translational modification Phosphothreonine. Phosphoserine occurs at positions 810, 814, and 819. Desmoglein repeat repeat units follow at residues 885 to 916, 917 to 945, 946 to 971, 972 to 995, 996 to 1024, and 1025 to 1055; these read AYSS…ESSV, SSRQ…SYAK, GSAV…ERVY, APTS…ERVI, QPNG…ERES, and ILAP…ERIL. Residues 913–932 form a disordered region; sequence ESSVSSRQSQKVVPPPDPVA. Low complexity predominate over residues 914-924; it reads SSVSSRQSQKV. Positions 1089-1122 are disordered; sequence LPNLDLEESDRPNSTITTSSTRVTKHSTMQHSYS. Polar residues predominate over residues 1100-1122; that stretch reads PNSTITTSSTRVTKHSTMQHSYS. At Ser1122 the chain carries Phosphoserine.

As to quaternary structure, interacts with PKP2. Interacts with CTNNB1; the interaction promotes localization of CTNNB1 at cell junctions thus reducing its nuclear localization and subsequent transcription of CTNNB1/TCF-target genes. Post-translationally, palmitoylated by ZDHHC5 at the plasma membrane. In terms of tissue distribution, expressed in undifferentiated pluripotent stem cells, expression decreases during differentiation (at protein level). Expressed by embryonic stem cells, expression is reduced during differentiation (at protein level). Expressed at the apical-lateral cell membrane of kidney tubular epithelial cells (at protein level). Expressed in epidermis and heart (at protein level). Expressed in the brain, spleen, lung, liver skeletal muscle, kidney and testis.

It localises to the cell membrane. Its subcellular location is the cell junction. The protein resides in the desmosome. It is found in the cytoplasm. Functionally, a component of desmosome cell-cell junctions which are required for positive regulation of cellular adhesion. Involved in the interaction of plaque proteins and intermediate filaments mediating cell-cell adhesion. Required for proliferation and viability of embryonic stem cells in the blastocyst, thereby crucial for progression of post-implantation embryonic development. Maintains pluripotency by regulating epithelial to mesenchymal transition/mesenchymal to epithelial transition (EMT/MET) via interacting with and sequestering CTNNB1 to sites of cell-cell contact, thereby reducing translocation of CTNNB1 to the nucleus and subsequent transcription of CTNNB1/TCF-target genes. Promotes pluripotency and the multi-lineage differentiation potential of hematopoietic stem cells. Plays a role in endothelial cell sprouting and elongation via mediating the junctional-association of cortical actin fibers and CDH5. Plays a role in limiting inflammatory infiltration and the apoptotic response to injury in kidney tubular epithelial cells, potentially via its role in maintaining cell-cell adhesion and the epithelial barrier. In Mus musculus (Mouse), this protein is Desmoglein-2 (Dsg2).